A 323-amino-acid polypeptide reads, in one-letter code: GMP reductase (323 aa).

Cys-174 acts as the Thioimidate intermediate in catalysis. An NADP(+)-binding site is contributed by 203–226; sequence IIADGGIRHNGDIAKSVRFGASMV.

The protein belongs to the IMPDH/GMPR family. GuaC type 2 subfamily.

It carries out the reaction IMP + NH4(+) + NADP(+) = GMP + NADPH + 2 H(+). Functionally, catalyzes the irreversible NADPH-dependent deamination of GMP to IMP. It functions in the conversion of nucleobase, nucleoside and nucleotide derivatives of G to A nucleotides, and in maintaining the intracellular balance of A and G nucleotides. This chain is GMP reductase, found in Oenococcus oeni (strain ATCC BAA-331 / PSU-1).